Reading from the N-terminus, the 452-residue chain is Bifunctional protein GlmU (452 aa).

The segment at 1 to 226 is pyrophosphorylase; it reads MSLHIIILAA…LHEVEGVNNR (226 aa). UDP-N-acetyl-alpha-D-glucosamine-binding positions include 8-11, K22, Q73, 78-79, 100-102, G136, E151, N166, and N224; these read LAAG, GT, and YGD. A Mg(2+)-binding site is contributed by D102. Position 224 (N224) interacts with Mg(2+). The segment at 227 to 247 is linker; that stretch reads IQLAALERAYQQQVAEELMLA. The N-acetyltransferase stretch occupies residues 248-452; sequence GATLRDPARV…IDGWTRPVKK (205 aa). UDP-N-acetyl-alpha-D-glucosamine contacts are provided by R330 and K348. The active-site Proton acceptor is the H360. Y363 and N374 together coordinate UDP-N-acetyl-alpha-D-glucosamine. Acetyl-CoA-binding positions include A377, 383-384, S402, A420, and R437; that span reads NY.

The protein in the N-terminal section; belongs to the N-acetylglucosamine-1-phosphate uridyltransferase family. In the C-terminal section; belongs to the transferase hexapeptide repeat family. In terms of assembly, homotrimer. Requires Mg(2+) as cofactor.

It is found in the cytoplasm. It carries out the reaction alpha-D-glucosamine 1-phosphate + acetyl-CoA = N-acetyl-alpha-D-glucosamine 1-phosphate + CoA + H(+). The enzyme catalyses N-acetyl-alpha-D-glucosamine 1-phosphate + UTP + H(+) = UDP-N-acetyl-alpha-D-glucosamine + diphosphate. Its pathway is nucleotide-sugar biosynthesis; UDP-N-acetyl-alpha-D-glucosamine biosynthesis; N-acetyl-alpha-D-glucosamine 1-phosphate from alpha-D-glucosamine 6-phosphate (route II): step 2/2. It participates in nucleotide-sugar biosynthesis; UDP-N-acetyl-alpha-D-glucosamine biosynthesis; UDP-N-acetyl-alpha-D-glucosamine from N-acetyl-alpha-D-glucosamine 1-phosphate: step 1/1. It functions in the pathway bacterial outer membrane biogenesis; LPS lipid A biosynthesis. Functionally, catalyzes the last two sequential reactions in the de novo biosynthetic pathway for UDP-N-acetylglucosamine (UDP-GlcNAc). The C-terminal domain catalyzes the transfer of acetyl group from acetyl coenzyme A to glucosamine-1-phosphate (GlcN-1-P) to produce N-acetylglucosamine-1-phosphate (GlcNAc-1-P), which is converted into UDP-GlcNAc by the transfer of uridine 5-monophosphate (from uridine 5-triphosphate), a reaction catalyzed by the N-terminal domain. This chain is Bifunctional protein GlmU, found in Hahella chejuensis (strain KCTC 2396).